Reading from the N-terminus, the 285-residue chain is tRNA (guanine-N(7)-)-methyltransferase (285 aa).

S-adenosyl-L-methionine contacts are provided by residues Gly102, 125 to 126 (EI), 160 to 161 (NA), and Cys180. The active site involves Asp183. Position 258–260 (258–260 (TEE)) interacts with S-adenosyl-L-methionine.

It belongs to the class I-like SAM-binding methyltransferase superfamily. TrmB family. Forms a complex with TRM82.

It localises to the nucleus. It catalyses the reaction guanosine(46) in tRNA + S-adenosyl-L-methionine = N(7)-methylguanosine(46) in tRNA + S-adenosyl-L-homocysteine. The protein operates within tRNA modification; N(7)-methylguanine-tRNA biosynthesis. In terms of biological role, catalyzes the formation of N(7)-methylguanine at position 46 (m7G46) in tRNA. The protein is tRNA (guanine-N(7)-)-methyltransferase of Candida glabrata (strain ATCC 2001 / BCRC 20586 / JCM 3761 / NBRC 0622 / NRRL Y-65 / CBS 138) (Yeast).